The chain runs to 344 residues: Lipase chaperone (344 aa).

Residues 14-34 (AMVYGVVGLAAIAGVAMWSGA) form a helical membrane-spanning segment.

Belongs to the lipase chaperone family.

Its subcellular location is the cell inner membrane. In terms of biological role, may be involved in the folding of the extracellular lipase during its passage through the periplasm. The chain is Lipase chaperone from Burkholderia lata (strain ATCC 17760 / DSM 23089 / LMG 22485 / NCIMB 9086 / R18194 / 383).